Reading from the N-terminus, the 624-residue chain is Pentatricopeptide repeat-containing protein At2g32630 (624 aa).

PPR repeat units lie at residues 153-187, 188-222, 223-257, 258-292, 293-327, 328-362, 363-397, 398-432, 433-467, 468-502, 503-537, 538-572, and 573-607; these read FEKFFDLVFRVYVDNGMFEEGLRVFDYMVKKGLSI, DERSCIVFLVAAKKRRRIDLCLEIFRRMVDSGVKI, TVYSLTIVVEGLCRRGEVEKSKKLIKEFSVKGIKP, EAYTYNTIINAYVKQRDFSGVEGVLKVMKKDGVVY, NKVTYTLLMELSVKNGKMSDAEKLFDEMRERGIES, DVHVYTSLISWNCRKGNMKRAFLLFDELTEKGLSP, SSYTYGALIDGVCKVGEMGAAEILMNEMQSKGVNI, TQVVFNTLIDGYCRKGMVDEASMIYDVMEQKGFQA, DVFTCNTIASCFNRLKRYDEAKQWLFRMMEGGVKL, STVSYTNLIDVYCKEGNVEEAKRLFVEMSSKGVQP, NAITYNVMIYAYCKQGKIKEARKLRANMEANGMDP, DSYTYTSLIHGECIADNVDEAMRLFSEMGLKGLDQ, and NSVTYTVMISGLSKAGKSDEAFGLYDEMKRKGYTI.

This sequence belongs to the PPR family. P subfamily.

This Arabidopsis thaliana (Mouse-ear cress) protein is Pentatricopeptide repeat-containing protein At2g32630.